Reading from the N-terminus, the 276-residue chain is NADH-cytochrome b5 reductase 2 (276 aa).

The region spanning 15–127 (EAKYPLPLIE…RGPRGRLFYH (113 aa)) is the FAD-binding FR-type domain. K17 carries the post-translational modification N6-acetyllysine. Y18 is subject to Phosphotyrosine. Residues 107–137 (ENMK…IRPD) and 146–181 (LADH…RMSL) each bind FAD.

The protein belongs to the flavoprotein pyridine nucleotide cytochrome reductase family. FAD serves as cofactor. In terms of tissue distribution, restricted expression.

The catalysed reaction is 2 Fe(III)-[cytochrome b5] + NADH = 2 Fe(II)-[cytochrome b5] + NAD(+) + H(+). Functionally, NADH-cytochrome b5 reductases are involved in desaturation and elongation of fatty acids, cholesterol biosynthesis, drug metabolism, and, in erythrocyte, methemoglobin reduction. Responsible for NADH-dependent lucigenin chemiluminescence in spermatozoa by reducing both lucigenin and 2-[4-iodophenyl]-3-[4-nitrophenyl]-5-[2,4-disulfophenyl]-2H tetrazolium monosodium salt (WST-1). The sequence is that of NADH-cytochrome b5 reductase 2 from Homo sapiens (Human).